The sequence spans 63 residues: U2-agatoxin-Ao1v (63 aa).

The N-terminal stretch at 1-14 (LLLISAMVGSMIAA) is a signal peptide. Residues 15-28 (VPEEESLQLSEDER) constitute a propeptide that is removed on maturation. 3 cysteine pairs are disulfide-bonded: Cys31–Cys47, Cys38–Cys52, and Cys46–Cys62.

This sequence belongs to the neurotoxin 01 (U2-agtx) family. As to expression, expressed by the venom gland.

The protein localises to the secreted. Insect active toxin causing rapid but reversible paralysis in crickets. No activity shown in mammals. Does not show effect on mammalian voltage-gated calcium channels. This is U2-agatoxin-Ao1v from Agelena orientalis (Funnel-web spider).